A 513-amino-acid polypeptide reads, in one-letter code: Putative thymidine phosphorylase (513 aa).

The protein belongs to the thymidine/pyrimidine-nucleoside phosphorylase family. Type 2 subfamily.

The enzyme catalyses thymidine + phosphate = 2-deoxy-alpha-D-ribose 1-phosphate + thymine. The polypeptide is Putative thymidine phosphorylase (Rhodopseudomonas palustris (strain BisB18)).